Consider the following 184-residue polypeptide: Photosystem I assembly protein Ycf4 (184 aa).

A run of 2 helical transmembrane segments spans residues 22–42 and 57–77; these read VCWA…GTSS and IIFF…LFIS.

It belongs to the Ycf4 family.

The protein localises to the plastid. Its subcellular location is the chloroplast thylakoid membrane. Functionally, seems to be required for the assembly of the photosystem I complex. The chain is Photosystem I assembly protein Ycf4 from Morus indica (Mulberry).